Consider the following 284-residue polypeptide: Trimeric intracellular cation channel type B (284 aa).

The Lumenal segment spans residues 1-15 (MESFSELSLQFSQLS). Residues 16–32 (MFPFFETAHYLTSVMSA) form a helical membrane-spanning segment. At 33–44 (REQAGAVDVASR) the chain is on the cytoplasmic side. A helical transmembrane segment spans residues 45–68 (SPLASWFSSMLYCFGGGILSSILL). Residues 69–79 (AEPPVGILSNT) are Lumenal-facing. The chain crosses the membrane as a helical span at residues 80–99 (TSIILASAVWYMVYYFPYDL). At 100–102 (FYN) the chain is on the cytoplasmic side. Residues 103–121 (CFFFLPIRLILAGMKEVTR) traverse the membrane as a helical segment. A 1,2-diacyl-sn-glycero-3-phospho-(1D-myo-inositol-4,5-bisphosphate) is bound by residues Lys-117 and Arg-121. At 122–139 (TWKILSGVAHAHSHYKDA) the chain is on the lumenal side. A helical transmembrane segment spans residues 140–157 (MLVMITIGWARGAGGGLI). The Cytoplasmic portion of the chain corresponds to 158 to 178 (SNFEQLVRGVWKPESNEFLKM). A helical membrane pass occupies residues 179–196 (SYPVKVTLIGAVLFTLQH). Residues 197 to 204 (GQYLPISR) are Lumenal-facing. A helical transmembrane segment spans residues 205 to 225 (HNLMFIYTLFLILIKVTMMLT). Residues 226–284 (RSTASPFLPLETSLQHILFSRQQIPAEVRESPSSSGDKGKPSKKTLDKDSGEQDNKKDN) lie on the Cytoplasmic side of the membrane. The disordered stretch occupies residues 250 to 284 (PAEVRESPSSSGDKGKPSKKTLDKDSGEQDNKKDN). The segment covering 262-284 (DKGKPSKKTLDKDSGEQDNKKDN) has biased composition (basic and acidic residues).

It belongs to the TMEM38 family. Homotrimer; conformation seems to be controled by binding to diacylglycerol (DAG).

It localises to the endoplasmic reticulum membrane. It catalyses the reaction K(+)(in) = K(+)(out). Its activity is regulated as follows. Channel activity is activated by increased cytosolic Ca(2+) levels and blocked by luminal high Ca(2+) levels. Its function is as follows. Intracellular monovalent cation channel required for maintenance of rapid intracellular calcium release. Acts as a potassium counter-ion channel that functions in synchronization with calcium release from intracellular stores. Activated by increased cytosolic Ca(2+) levels. This Xenopus tropicalis (Western clawed frog) protein is Trimeric intracellular cation channel type B (tmem38b).